The chain runs to 530 residues: Phosphoenolpyruvate carboxykinase (ATP) (530 aa).

Substrate contacts are provided by Arg58, Tyr195, and Lys201. Residues Lys201, His220, and 236–244 each bind ATP; that span reads GLSGTGKTT. 2 residues coordinate Mn(2+): Lys201 and His220. Asp257 lines the Mn(2+) pocket. ATP is bound by residues Glu285, Arg321, 440–441, and Thr446; that span reads RI. Arg321 contacts substrate.

The protein belongs to the phosphoenolpyruvate carboxykinase (ATP) family. Requires Mn(2+) as cofactor.

The protein resides in the cytoplasm. It catalyses the reaction oxaloacetate + ATP = phosphoenolpyruvate + ADP + CO2. The protein operates within carbohydrate biosynthesis; gluconeogenesis. Its function is as follows. Involved in the gluconeogenesis. Catalyzes the conversion of oxaloacetate (OAA) to phosphoenolpyruvate (PEP) through direct phosphoryl transfer between the nucleoside triphosphate and OAA. The polypeptide is Phosphoenolpyruvate carboxykinase (ATP) (Staphylococcus aureus (strain MSSA476)).